Consider the following 103-residue polypeptide: CLAVATA3/ESR (CLE)-related protein 22 (103 aa).

Positions 1-34 are cleaved as a signal peptide; the sequence is MGNYYSRRKSRKHITTVALIILLLLLFLFLYAKA. Positions 37–103 are disordered; it reads SSPNIHHHST…FTGPNPLHNR (67 aa). Positions 41–50 are enriched in basic residues; the sequence is IHHHSTHGSL. Polar residues predominate over residues 66 to 76; that stretch reads NAASSRGSKYT. P97 carries the hydroxyproline modification. O-linked (Ara...) hydroxyproline glycosylation occurs at P97.

Belongs to the CLV3/ESR signal peptide family. Post-translationally, the O-glycosylation (arabinosylation) of the hydroxyproline Pro-97 enhances binding affinity of the CLE22p peptide for its receptor. As to expression, mostly expressed in stems and apex, and, to a lower extent, in seedlings, leaves, flowers and siliques.

It localises to the secreted. Its subcellular location is the extracellular space. Functionally, extracellular signal peptide that regulates cell fate. Represses root apical meristem maintenance. This Arabidopsis thaliana (Mouse-ear cress) protein is CLAVATA3/ESR (CLE)-related protein 22.